The chain runs to 327 residues: Zinc transport protein ZntB (327 aa).

The Cytoplasmic segment spans residues 1 to 273 (MEAIKGSEVN…ARRTYTMSLM (273 aa)). Residues 274–294 (AMVFLPSTFLTGLFGVNLGGI) traverse the membrane as a helical segment. At 295 to 300 (PGGAWH) the chain is on the periplasmic side. Residues 301 to 321 (FGFSMFCILLVVLIGGVTLWL) form a helical membrane-spanning segment. At 322 to 327 (HRSKWL) the chain is on the cytoplasmic side.

The protein belongs to the CorA metal ion transporter (MIT) (TC 1.A.35) family.

It is found in the cell inner membrane. It catalyses the reaction Zn(2+)(out) + H(+)(out) = Zn(2+)(in) + H(+)(in). Zinc transporter. Acts as a Zn(2+):proton symporter, which likely mediates zinc ion uptake. The protein is Zinc transport protein ZntB of Citrobacter koseri (strain ATCC BAA-895 / CDC 4225-83 / SGSC4696).